Consider the following 254-residue polypeptide: Probable pectate lyase E (254 aa).

Positions 1 to 17 (MYQPLLLLPLLLTSAFA) are cleaved as a signal peptide. The N-linked (GlcNAc...) asparagine glycan is linked to N175. A disordered region spans residues 228–254 (DNNKKEPAKKSSGPSNACKYKEPLASC).

This sequence belongs to the polysaccharide lyase 3 family. Ca(2+) is required as a cofactor.

It localises to the secreted. The enzyme catalyses Eliminative cleavage of (1-&gt;4)-alpha-D-galacturonan to give oligosaccharides with 4-deoxy-alpha-D-galact-4-enuronosyl groups at their non-reducing ends.. In terms of biological role, pectinolytic enzyme consist of four classes of enzymes: pectin lyase, polygalacturonase, pectin methylesterase and rhamnogalacturonase. Among pectinolytic enzymes, pectin lyase is the most important in depolymerization of pectin, since it cleaves internal glycosidic bonds of highly methylated pectins. Favors pectate, the anion, over pectin, the methyl ester. This chain is Probable pectate lyase E (plyE), found in Aspergillus fumigatus (strain ATCC MYA-4609 / CBS 101355 / FGSC A1100 / Af293) (Neosartorya fumigata).